The following is a 122-amino-acid chain: Ferredoxin (122 aa).

The segment at 1–33 (MSHDRRLTVGSLLPNQPRPVAVPKAPSVVQPSK) is disordered. Residues 8–14 (TVGSLLP) form a targeting peptide region. The 2Fe-2S ferredoxin-type domain occupies 40–122 (AIIRLEQNGR…FRLACQANME (83 aa)). The [2Fe-2S] cluster site is built by C75, C80, C83, and C117.

The protein belongs to the 2Fe2S plant-type ferredoxin family. [2Fe-2S] cluster serves as cofactor.

It localises to the encapsulin nanocompartment. In terms of biological role, cargo protein of a type 1 encapsulin nanocompartment. An iron-binding protein probably involved in iron mineralization in the encapsulin nanocompartment. 2 different cargo proteins have been identified (IMEF and Fer); when both are expressed in E.coli with the shell protein only IMEF is detected within the nanocompartment. E.coli expressing all 3 genes stores the largest amount of iron and is protected from Fe/H2O2-induced oxidative stress. This chain is Ferredoxin, found in Bacillus thermotolerans (Quasibacillus thermotolerans).